A 377-amino-acid polypeptide reads, in one-letter code: Chaperone protein DnaJ (377 aa).

A J domain is found at 4–69; it reads DYYEVLGVSK…EKRARYDQMG (66 aa). The CR-type zinc finger occupies 131–213; the sequence is GTEKEIQVPR…CSGKGTTRKV (83 aa). Residues C144, C147, C161, C164, C187, C190, C201, and C204 each contribute to the Zn(2+) site. CXXCXGXG motif repeat units lie at residues 144–151, 161–168, 187–194, and 201–208; these read CTECHGSG, CSQCHGTG, CPACNGSG, and CKECSGKG.

Belongs to the DnaJ family. As to quaternary structure, homodimer. It depends on Zn(2+) as a cofactor.

The protein localises to the cytoplasm. Functionally, participates actively in the response to hyperosmotic and heat shock by preventing the aggregation of stress-denatured proteins and by disaggregating proteins, also in an autonomous, DnaK-independent fashion. Unfolded proteins bind initially to DnaJ; upon interaction with the DnaJ-bound protein, DnaK hydrolyzes its bound ATP, resulting in the formation of a stable complex. GrpE releases ADP from DnaK; ATP binding to DnaK triggers the release of the substrate protein, thus completing the reaction cycle. Several rounds of ATP-dependent interactions between DnaJ, DnaK and GrpE are required for fully efficient folding. Also involved, together with DnaK and GrpE, in the DNA replication of plasmids through activation of initiation proteins. This Desulfitobacterium hafniense (strain DSM 10664 / DCB-2) protein is Chaperone protein DnaJ.